The sequence spans 411 residues: MSVGCACPGCSSKSFKLYSPKEPPNGNAFPPFHPGTMLDRDVGPTPMYPPTYLEPGIGRHTPYGNQTDYRIFELNKRLQNWTEECDNLWWDAFTTEFFEDDAMLTITFCLEDGPKRYTIGRTLIPRYFRSIFEGGATELYYVLKHPKESFHNNFVSLDCDQCTMVTQHGKPMFTQVCVEGRLYLEFMFDDMMRIKTWHFSIRQHRELIPRSILAMHAQDPQMLDQLSKNITRCGLSNSTLNYLRLCVILEPMQELMSRHKTYSLSPRDCLKTCLFQKWQRMVAPPAEPARQQPSKRRKRKMSGGSTMSSGGGNTNNSNSKKKSPASTFALSSQVPDVMVVGEPTLMGGEFGDEDERLITRLENTQFDAANGIDDEDSFNNSPALGANSPWNSKPPSSQESKSENPTSQASQ.

Disordered regions lie at residues 284 to 330 and 367 to 411; these read PPAE…TFAL and DAAN…QASQ. Positions 302-318 are enriched in low complexity; it reads SGGSTMSSGGGNTNNSN. One can recognise an LIM interaction domain (LID) domain in the interval 336 to 375; it reads DVMVVGEPTLMGGEFGDEDERLITRLENTQFDAANGIDDE.

This sequence belongs to the LDB family. In terms of assembly, forms homodimers and heterodimers. First expressed at stages 15-16 in presumptive limb mesoderm. As limb outgrowth proceeds, expressed in the entire limb bud, concentrating in the distal mesoderm throughout limb development. Both hindlimbs and forelimbs exhibit similar expression patterns.

It localises to the nucleus. Its function is as follows. Binds to the LIM domain of a wide variety of LIM domain-containing transcription factors. This is LIM domain-binding protein 1 from Gallus gallus (Chicken).